The following is a 124-amino-acid chain: UPF0102 protein HCH_05895 (124 aa).

This sequence belongs to the UPF0102 family.

This is UPF0102 protein HCH_05895 from Hahella chejuensis (strain KCTC 2396).